The sequence spans 510 residues: Sulfoquinovosyl transferase SQD2 (510 aa).

The N-terminal 83 residues, 1-83 (MTTLSSINLS…SNDMTITQVR (83 aa)), are a transit peptide targeting the chloroplast. Phosphoserine is present on S88. Residues 198 to 218 (PGVMVFGALAIAKMLSVPIVM) traverse the membrane as a helical segment.

This sequence belongs to the glycosyltransferase group 1 family. Glycosyltransferase 4 subfamily.

It is found in the plastid. The protein localises to the chloroplast membrane. The catalysed reaction is UDP-alpha-D-6-sulfoquinovose + a 1,2-diacyl-sn-glycerol = a 6-sulfo-alpha-D-quinovosyldiacylglycerol + UDP + H(+). The protein operates within glycolipid biosynthesis. Functionally, catalyzes the transfer of the sulfoquinovose moiety from UDP-sulfoquinovose to diacylglycerol during sulfolipid biosynthesis. Sulfolipid contributes to maintaining a negatively charged lipid-water interface, a requirement for proper function of photosynthetic membranes. Sulfolipid may also function as a substitute of anionic phospholipids under phosphate-limited growth conditions. This Arabidopsis thaliana (Mouse-ear cress) protein is Sulfoquinovosyl transferase SQD2.